The following is a 330-amino-acid chain: Putative UV-damage endonuclease (330 aa).

It belongs to the uve1/UvsE family.

It is found in the virion. In terms of biological role, endonuclease for the repair of UV-irradiated DNA. The protein is Putative UV-damage endonuclease of Acanthamoeba polyphaga mimivirus (APMV).